The primary structure comprises 499 residues: Cytochrome P450 81E8 (499 aa).

The helical transmembrane segment at 3-23 threads the bilayer; sequence TFYLSLIISLFFLIITLKVFF. Cys436 is a heme binding site.

Belongs to the cytochrome P450 family. Heme serves as cofactor.

Its subcellular location is the membrane. In terms of biological role, probable monooxygenases exhibiting no activity with isoflavones such as formononetin, biochanin A, pseudobaptigenin, daidzein, genistein, isoformononetin and prunetin, or with flavonoids including naringenin, liquiritigenin, apigenin, luteolin, or kaempferol. The protein is Cytochrome P450 81E8 of Medicago truncatula (Barrel medic).